Consider the following 365-residue polypeptide: 3-amino-4-hydroxybenzoate 4-O-methyltransferase (365 aa).

Polar residues predominate over residues 1–18; that stretch reads MTVPENAQHTAPDQTQHT. Residues 1–32 form a disordered region; that stretch reads MTVPENAQHTAPDQTQHTAPDRTRQAQQAAPD. Residues Asp227, 253–255, and Arg270 each bind S-adenosyl-L-methionine; that span reads GDF. His273 serves as the catalytic Proton acceptor.

This sequence belongs to the class I-like SAM-binding methyltransferase superfamily. Cation-independent O-methyltransferase family.

It catalyses the reaction 3-amino-2,4-dihydroxybenzoate + S-adenosyl-L-methionine = 3-amino-2-hydroxy-4-methoxybenzoate + S-adenosyl-L-homocysteine + H(+). The protein operates within antibiotic biosynthesis. Part of a gene cluster involved in the biosynthesis of cremeomycin, a light-sensitive o-diazoquinone with antibacterial and antiproliferative effects. Catalyzes the methylation of the C4 hydroxyl group of 3-amino-2,4-dihydroxybenzoate (3,2,4-ADHBA) to form 3-amino-2-hydroxy-4-methoxybenzoate (3,2,4-AHMBA). In vitro, can also catalyze the methylation of 3-amino-4-hydroxybenzoate (3,4-AHBA). This is 3-amino-4-hydroxybenzoate 4-O-methyltransferase from Streptomyces cremeus.